We begin with the raw amino-acid sequence, 537 residues long: DELLA protein GAI (537 aa).

The interval Met-1–Gly-33 is disordered. Residues Ser-9–Ser-20 are compositionally biased toward low complexity. Positions Asp-37–Ala-41 match the DELLA motif motif. Residues Lys-131–Arg-157 form a disordered region. Residues Ser-147–Thr-156 are compositionally biased toward low complexity. Positions Ile-162–Ala-533 constitute a GRAS domain. Residues Val-169 to Ile-223 are leucine repeat I (LRI). Positions Gln-241–Gly-306 are VHIID. Positions Val-272–Asp-276 match the VHIID motif. A leucine repeat II (LRII) region spans residues Gln-320–Glu-352. The tract at residues Val-364–Asn-454 is PFYRE. The short motif at Leu-372–Leu-376 is the LXXLL motif element. Residues Ala-457 to Ala-533 are SAW.

This sequence belongs to the GRAS family. DELLA subfamily. In terms of processing, phosphorylated. Ubiquitinated. Upon GA application it is ubiquitinated, leading to its subsequent degradation.

It is found in the nucleus. Its function is as follows. Probable transcriptional regulator that acts as a repressor of the gibberellin (GA) signaling pathway. Probably acts by participating in large multiprotein complexes that represses transcription of GA-inducible genes. Upon GA application, it is degraded by the proteasome, allowing the GA signaling pathway. This Gossypium hirsutum (Upland cotton) protein is DELLA protein GAI (GAI).